A 108-amino-acid chain; its full sequence is Precursor of CEP16 (108 aa).

A signal peptide spans 1-27 (MVMAKNLTKFYVVFLVVLMMVVSLLLA). A propeptide spanning residues 28–92 (IEGRPVKDSS…VGHHRAKGYK (65 aa)) is cleaved from the precursor. 2 N-linked (GlcNAc...) asparagine glycosylation sites follow: Asn50 and Asn98. A disordered region spans residues 76–108 (QSGPSPGVGHHRAKGYKMFGRANDSGPSPGVGH). 2 positions are modified to hydroxyproline: Pro102 and Pro104.

It belongs to the C-terminally encoded plant signaling peptide (CEP) family. Interacts with CEP receptors (e.g. CEPR1 and CEPR2). In terms of processing, the mature small signaling peptide is generated by proteolytic processing of the longer precursor.

The protein resides in the secreted. The protein localises to the extracellular space. Its subcellular location is the apoplast. Extracellular signaling peptide that may regulate primary root growth rate and systemic nitrogen (N)-demand signaling. In Arabidopsis thaliana (Mouse-ear cress), this protein is Precursor of CEP16.